The sequence spans 437 residues: tRNA(Ile2) 2-agmatinylcytidine synthetase TiaS (437 aa).

It belongs to the TiaS family.

The protein localises to the cytoplasm. It carries out the reaction cytidine(34) in tRNA(Ile2) + agmatine + ATP + H2O = 2-agmatinylcytidine(34) in tRNA(Ile2) + AMP + 2 phosphate + 2 H(+). ATP-dependent agmatine transferase that catalyzes the formation of 2-agmatinylcytidine (agm2C) at the wobble position (C34) of tRNA(Ile2), converting the codon specificity from AUG to AUA. This is tRNA(Ile2) 2-agmatinylcytidine synthetase TiaS from Acidilobus saccharovorans (strain DSM 16705 / JCM 18335 / VKM B-2471 / 345-15).